A 350-amino-acid polypeptide reads, in one-letter code: D-alanine--D-alanine ligase (350 aa).

The ATP-grasp domain maps to 138-346 (KSAFSSAGLS…LEQLVHKLIQ (209 aa)). Position 173-228 (173-228 (ERELNYPCFVKPANLGSSVGISKVRSRQELEAGLEQAAALDPRLVVEQGVNAREVE)) interacts with ATP. The Mg(2+) site is built by Asp-299, Glu-313, and Asn-315.

It belongs to the D-alanine--D-alanine ligase family. Mg(2+) is required as a cofactor. Requires Mn(2+) as cofactor.

Its subcellular location is the cytoplasm. It catalyses the reaction 2 D-alanine + ATP = D-alanyl-D-alanine + ADP + phosphate + H(+). Its pathway is cell wall biogenesis; peptidoglycan biosynthesis. Functionally, cell wall formation. In Synechococcus sp. (strain CC9605), this protein is D-alanine--D-alanine ligase.